The following is a 236-amino-acid chain: Small ribosomal subunit protein uS5 (236 aa).

Residues Glu-61–Ile-124 form the S5 DRBM domain.

It belongs to the universal ribosomal protein uS5 family. In terms of assembly, part of the 30S ribosomal subunit. Contacts protein S4.

Functionally, with S4 and S12 plays an important role in translational accuracy. The protein is Small ribosomal subunit protein uS5 of Pyrococcus furiosus (strain ATCC 43587 / DSM 3638 / JCM 8422 / Vc1).